The primary structure comprises 207 residues: Ribonuclease HII (207 aa).

Positions 18-207 (GLVAGVDEAG…VAEVLREALP (190 aa)) constitute an RNase H type-2 domain. A divalent metal cation-binding residues include Asp24, Glu25, and Asp116.

Belongs to the RNase HII family. It depends on Mn(2+) as a cofactor. The cofactor is Mg(2+).

Its subcellular location is the cytoplasm. The catalysed reaction is Endonucleolytic cleavage to 5'-phosphomonoester.. Endonuclease that specifically degrades the RNA of RNA-DNA hybrids. This Albidiferax ferrireducens (strain ATCC BAA-621 / DSM 15236 / T118) (Rhodoferax ferrireducens) protein is Ribonuclease HII.